The chain runs to 493 residues: GTPase Der (493 aa).

Positions 3-166 constitute an EngA-type G 1 domain; the sequence is PVIALVGRPN…EALGIFPKDN (164 aa). GTP-binding positions include 9 to 16, 56 to 60, and 118 to 121; these read GRPNVGKS, DTGGI, and NKVD. A disordered region spans residues 166 to 195; it reads NAEEEGEGEPASEEVAEGEEPTRIPGPSEK. The span at 167–184 shows a compositional bias: acidic residues; it reads AEEEGEGEPASEEVAEGE. Residues 198–371 form the EngA-type G 2 domain; sequence IKIAIIGRPN…SVQESFRSAV (174 aa). GTP is bound by residues 204 to 211, 251 to 255, and 316 to 319; these read GRPNVGKS, DTAGV, and NKWD. Residues 372 to 456 form the KH-like domain; that stretch reads TRWPTSRLTS…PIRIEYKGGE (85 aa). The segment covering 454-463 has biased composition (basic and acidic residues); the sequence is GGENPYEGKK. The segment at 454–493 is disordered; the sequence is GGENPYEGKKNSLTARQVNKKRRLMSHHKKAEKKKKDKRR. Positions 471–493 are enriched in basic residues; sequence VNKKRRLMSHHKKAEKKKKDKRR.

Belongs to the TRAFAC class TrmE-Era-EngA-EngB-Septin-like GTPase superfamily. EngA (Der) GTPase family. Associates with the 50S ribosomal subunit.

Its function is as follows. GTPase that plays an essential role in the late steps of ribosome biogenesis. The polypeptide is GTPase Der (Pseudomonas aeruginosa (strain UCBPP-PA14)).